We begin with the raw amino-acid sequence, 891 residues long: Dynein axonemal intermediate chain 3 (891 aa).

Residues 1–16 (MAPKQKKKSSRRKKSP) are compositionally biased toward basic residues. A disordered region spans residues 1–27 (MAPKQKKKSSRRKKSPKPILAASEDME). WD repeat units lie at residues 395–435 (ESPD…DRIE), 477–533 (GHKR…PLTP), 670–709 (IHDGIVHTIQRSPFYDDIILTVGGWNVAIWKESVMTGPLL), and 713–753 (CAPK…HEPA). Residues 817–861 (HLEYVEQRKKIREQEKKEMEQEMAKKKVKIYQKSKEQMEAELKMD) adopt a coiled-coil conformation.

Interacts with ACTR2; this interaction reduces binding of the Arp2/3 complex to the VCA domain of nucleation promoting factors. Part of the multisubunit axonemal dynein complex formed at least of two heavy chains and a number of intermediate and light chains. Found in a associated with the catalytic heavy chain DNAH2, the intermediate chain DNAI4, and the light chain DYNLT1.

Its subcellular location is the cytoplasm. Functionally, acts as a negative regulator of cell migration, invasion, and metastasis downstream of p53/TP53, through inhibition of Arp2/3 complex-mediated actin polymerization. Via its association with the multisubunit axonemal dynein complex, is potentially involved in the regulation of cilia function. May play a role in osteogenesis of dental tissue-derived mesenchymal stem cells. This Macaca fascicularis (Crab-eating macaque) protein is Dynein axonemal intermediate chain 3 (DNAI3).